The following is a 333-amino-acid chain: Pro-cathepsin H (333 aa).

Positions 1–20 are cleaved as a signal peptide; that stretch reads MWAALPLLCAGAWLLSTGAT. The propeptide at 21–95 is activation peptide; it reads AELTVNAIEK…AEIKHKFLWS (75 aa). Residues asparagine 70 and asparagine 99 are each glycosylated (N-linked (GlcNAc...) asparagine). 4 disulfide bridges follow: cysteine 100/cysteine 325, cysteine 136/cysteine 179, cysteine 170/cysteine 212, and cysteine 270/cysteine 320. A propeptide spanning residues 104-113 is cleaved from the precursor; it reads KSNYLRGTGP. Cysteine 139 is a catalytic residue. A glycan (N-linked (GlcNAc...) asparagine) is linked at asparagine 228. Active-site residues include histidine 279 and asparagine 299.

It belongs to the peptidase C1 family. Composed of a mini chain and a large chain. The large chain may be split into heavy and light chain. All chains are held together by disulfide bonds. As to expression, widely expressed with highest expression found in non-skeletal tissues. Low levels found in skeletal tissue.

It is found in the lysosome. The catalysed reaction is Hydrolysis of proteins, acting as an aminopeptidase (notably, cleaving Arg-|-Xaa bonds) as well as an endopeptidase.. In terms of biological role, important for the overall degradation of proteins in lysosomes. This is Pro-cathepsin H (Ctsh) from Mus musculus (Mouse).